The chain runs to 466 residues: Ribulose bisphosphate carboxylase large chain (466 aa).

K5 carries the N6,N6,N6-trimethyllysine modification. Substrate is bound by residues N114 and T164. K166 (proton acceptor) is an active-site residue. K168 contributes to the substrate binding site. K192, D194, and E195 together coordinate Mg(2+). An N6-carboxylysine modification is found at K192. The Proton acceptor role is filled by H285. Residues R286, H318, and S370 each contribute to the substrate site.

It belongs to the RuBisCO large chain family. Type I subfamily. In terms of assembly, heterohexadecamer of 8 large chains and 8 small chains; disulfide-linked. The disulfide link is formed within the large subunit homodimers. Mg(2+) is required as a cofactor. In terms of processing, the disulfide bond which can form in the large chain dimeric partners within the hexadecamer appears to be associated with oxidative stress and protein turnover.

It is found in the plastid. The protein resides in the chloroplast. It catalyses the reaction 2 (2R)-3-phosphoglycerate + 2 H(+) = D-ribulose 1,5-bisphosphate + CO2 + H2O. The enzyme catalyses D-ribulose 1,5-bisphosphate + O2 = 2-phosphoglycolate + (2R)-3-phosphoglycerate + 2 H(+). RuBisCO catalyzes two reactions: the carboxylation of D-ribulose 1,5-bisphosphate, the primary event in carbon dioxide fixation, as well as the oxidative fragmentation of the pentose substrate in the photorespiration process. Both reactions occur simultaneously and in competition at the same active site. In Coriaria myrtifolia (Tanner's sumac), this protein is Ribulose bisphosphate carboxylase large chain.